A 356-amino-acid polypeptide reads, in one-letter code: Protein-glutamate methylesterase/protein-glutamine glutaminase 2 (356 aa).

The Response regulatory domain occupies 7 to 124 (KVLCVDDSAL…RDGLMEYTDT (118 aa)). Residue aspartate 58 is modified to 4-aspartylphosphate. Positions 157-349 (LLSTEKLIIL…QRVMARLATY (193 aa)) constitute a CheB-type methylesterase domain. Residues serine 169, histidine 195, and aspartate 291 contribute to the active site.

Belongs to the CheB family. In terms of processing, phosphorylated by CheA. Phosphorylation of the N-terminal regulatory domain activates the methylesterase activity.

The protein resides in the cytoplasm. The catalysed reaction is [protein]-L-glutamate 5-O-methyl ester + H2O = L-glutamyl-[protein] + methanol + H(+). The enzyme catalyses L-glutaminyl-[protein] + H2O = L-glutamyl-[protein] + NH4(+). Functionally, involved in chemotaxis. Part of a chemotaxis signal transduction system that modulates chemotaxis in response to various stimuli. Catalyzes the demethylation of specific methylglutamate residues introduced into the chemoreceptors (methyl-accepting chemotaxis proteins or MCP) by CheR. Also mediates the irreversible deamidation of specific glutamine residues to glutamic acid. This chain is Protein-glutamate methylesterase/protein-glutamine glutaminase 2, found in Cupriavidus pinatubonensis (strain JMP 134 / LMG 1197) (Cupriavidus necator (strain JMP 134)).